Consider the following 456-residue polypeptide: Na(+)-translocating NADH-quinone reductase subunit A (456 aa).

It belongs to the NqrA family. Composed of six subunits; NqrA, NqrB, NqrC, NqrD, NqrE and NqrF.

The catalysed reaction is a ubiquinone + n Na(+)(in) + NADH + H(+) = a ubiquinol + n Na(+)(out) + NAD(+). In terms of biological role, NQR complex catalyzes the reduction of ubiquinone-1 to ubiquinol by two successive reactions, coupled with the transport of Na(+) ions from the cytoplasm to the periplasm. NqrA to NqrE are probably involved in the second step, the conversion of ubisemiquinone to ubiquinol. The sequence is that of Na(+)-translocating NADH-quinone reductase subunit A from Rhodopirellula baltica (strain DSM 10527 / NCIMB 13988 / SH1).